Reading from the N-terminus, the 154-residue chain is Prefoldin subunit 5 (154 aa).

Alanine 2 bears the N-acetylalanine mark. Lysine 42 carries the post-translational modification N6-acetyllysine. Serine 56 carries the phosphoserine modification.

It belongs to the prefoldin subunit alpha family. As to quaternary structure, heterohexamer of two PFD-alpha type and four PFD-beta type subunits.

The protein resides in the nucleus. In terms of biological role, binds specifically to cytosolic chaperonin (c-CPN) and transfers target proteins to it. Binds to nascent polypeptide chain and promotes folding in an environment in which there are many competing pathways for nonnative proteins. Represses the transcriptional activity of MYC. The sequence is that of Prefoldin subunit 5 (Pfdn5) from Mus musculus (Mouse).